A 282-amino-acid chain; its full sequence is Undecaprenyl-diphosphatase (282 aa).

Helical transmembrane passes span 1-21, 39-59, 85-105, 115-135, 153-173, 193-213, 229-249, and 259-279; these read MTLI…FLPI, PGAA…MLYF, AKMG…GLLF, SLYW…LAEW, IGWK…IPGS, AARF…AFEL, NLAV…AFLL, and IFIA…GGGT.

This sequence belongs to the UppP family.

The protein localises to the cell inner membrane. It catalyses the reaction di-trans,octa-cis-undecaprenyl diphosphate + H2O = di-trans,octa-cis-undecaprenyl phosphate + phosphate + H(+). Functionally, catalyzes the dephosphorylation of undecaprenyl diphosphate (UPP). Confers resistance to bacitracin. The protein is Undecaprenyl-diphosphatase of Chlorobium luteolum (strain DSM 273 / BCRC 81028 / 2530) (Pelodictyon luteolum).